The following is a 152-amino-acid chain: Ribonuclease H (152 aa).

An RNase H type-1 domain is found at 6 to 147 (KKNRVIAYTD…ADELANKAIA (142 aa)). Mg(2+) contacts are provided by Asp15, Glu53, Asp75, and Asp139.

The protein belongs to the RNase H family. As to quaternary structure, monomer. It depends on Mg(2+) as a cofactor.

The protein resides in the cytoplasm. It carries out the reaction Endonucleolytic cleavage to 5'-phosphomonoester.. Functionally, endonuclease that specifically degrades the RNA of RNA-DNA hybrids. The polypeptide is Ribonuclease H (Francisella tularensis subsp. tularensis (strain FSC 198)).